A 200-amino-acid polypeptide reads, in one-letter code: Interleukin 17-like protein (200 aa).

Residues 1–26 (MGNFFLFAMTLVVCSVIVLLTGVADS) form the signal peptide. Residue N46 is glycosylated (N-linked (GlcNAc...) asparagine). 2 disulfides stabilise this stretch: C122-C175 and C127-C177. N192 carries N-linked (GlcNAc...) asparagine glycosylation.

Belongs to the IL-17 family. As to expression, expressed in several tissues including hemocytes, gills, mantle, adductor muscle, labial palps, digestive glands and heart with highest levels in gills and lowest levels in adductor muscle and heart.

It is found in the secreted. The polypeptide is Interleukin 17-like protein (Magallana gigas (Pacific oyster)).